The following is an 83-amino-acid chain: UPF0248 protein PYRAB10580 (83 aa).

This sequence belongs to the UPF0248 family.

The chain is UPF0248 protein PYRAB10580 from Pyrococcus abyssi (strain GE5 / Orsay).